A 273-amino-acid polypeptide reads, in one-letter code: Beta-lactamase OXA-133 (273 aa).

Positions 1-17 are cleaved as a signal peptide; that stretch reads MNKYFTCYVVASLFFSG. The N-palmitoyl cysteine moiety is linked to residue Cys18. Cys18 carries S-diacylglycerol cysteine lipidation. The active-site Acyl-ester intermediate is Ser79. Lys82 carries the N6-carboxylysine modification. A substrate-binding site is contributed by 216-218; it reads KTG.

Belongs to the class-D beta-lactamase family.

Its subcellular location is the cell membrane. It catalyses the reaction a beta-lactam + H2O = a substituted beta-amino acid. Its function is as follows. Catalyzes the hydrolysis of beta-lactam antibiotics. This Acinetobacter radioresistens protein is Beta-lactamase OXA-133.